The chain runs to 290 residues: Ribosomal RNA small subunit methyltransferase A (290 aa).

S-adenosyl-L-methionine contacts are provided by asparagine 27, leucine 29, glycine 54, glutamate 75, aspartate 100, and asparagine 125.

This sequence belongs to the class I-like SAM-binding methyltransferase superfamily. rRNA adenine N(6)-methyltransferase family. RsmA subfamily.

It localises to the cytoplasm. The enzyme catalyses adenosine(1518)/adenosine(1519) in 16S rRNA + 4 S-adenosyl-L-methionine = N(6)-dimethyladenosine(1518)/N(6)-dimethyladenosine(1519) in 16S rRNA + 4 S-adenosyl-L-homocysteine + 4 H(+). Specifically dimethylates two adjacent adenosines (A1518 and A1519) in the loop of a conserved hairpin near the 3'-end of 16S rRNA in the 30S particle. May play a critical role in biogenesis of 30S subunits. This Streptococcus pyogenes serotype M18 (strain MGAS8232) protein is Ribosomal RNA small subunit methyltransferase A.